Consider the following 309-residue polypeptide: Glutaminase 2 (309 aa).

Residues Ser-65, Asn-117, Glu-162, Asn-169, Tyr-193, Tyr-245, and Val-263 each coordinate substrate.

It belongs to the glutaminase family. Homotetramer.

It carries out the reaction L-glutamine + H2O = L-glutamate + NH4(+). The polypeptide is Glutaminase 2 (Bacillus subtilis (strain 168)).